The chain runs to 210 residues: Thymidylate kinase (210 aa).

11–18 (GLEGAGKS) serves as a coordination point for ATP.

Belongs to the thymidylate kinase family.

The enzyme catalyses dTMP + ATP = dTDP + ADP. Its function is as follows. Phosphorylation of dTMP to form dTDP in both de novo and salvage pathways of dTTP synthesis. This chain is Thymidylate kinase, found in Vibrio campbellii (strain ATCC BAA-1116).